The following is a 127-amino-acid chain: Aspartate 1-decarboxylase (127 aa).

The active-site Schiff-base intermediate with substrate; via pyruvic acid is the S25. S25 is subject to Pyruvic acid (Ser). T57 contributes to the substrate binding site. Y58 functions as the Proton donor in the catalytic mechanism. Substrate is bound at residue 73-75 (GAA).

The protein belongs to the PanD family. Heterooctamer of four alpha and four beta subunits. Requires pyruvate as cofactor. Is synthesized initially as an inactive proenzyme, which is activated by self-cleavage at a specific serine bond to produce a beta-subunit with a hydroxyl group at its C-terminus and an alpha-subunit with a pyruvoyl group at its N-terminus.

The protein resides in the cytoplasm. It carries out the reaction L-aspartate + H(+) = beta-alanine + CO2. It functions in the pathway cofactor biosynthesis; (R)-pantothenate biosynthesis; beta-alanine from L-aspartate: step 1/1. Functionally, catalyzes the pyruvoyl-dependent decarboxylation of aspartate to produce beta-alanine. This Neisseria meningitidis serogroup A / serotype 4A (strain DSM 15465 / Z2491) protein is Aspartate 1-decarboxylase.